Here is a 1625-residue protein sequence, read N- to C-terminus: E3 ubiquitin-protein ligase KEG (1625 aa).

Residues 10-56 (CSVCHTRYNEDERVPLLLQCGHGFCKDCLSKMFSTSSDTTLTCPRCR) form an RING-type zinc finger. Positions 91–106 (YTDDEDDDDEEDGSDE) are enriched in acidic residues. The segment at 91–110 (YTDDEDDDDEEDGSDEDGAR) is disordered. The Protein kinase domain occupies 141 to 427 (RQIGEESSSG…TFNAMLATFL (287 aa)). Residues 147–155 (SSSGGFGGV) and lysine 176 contribute to the ATP site. 11 ANK repeats span residues 467 to 496 (DNPN…AGGG), 510 to 540 (DGQS…NVDI), 544 to 573 (DGDP…NVRS), 579 to 608 (SGPS…DPNA), 612 to 641 (EGET…SRSM), 647 to 676 (KCLT…PEEI), 685 to 720 (PVGT…DPTA), 725 to 754 (HGRT…NANI), 758 to 787 (HNTI…DCNI), 791 to 826 (EGDN…AVDV), and 832 to 863 (KTVR…HLSP).

As to quaternary structure, interacts with ABI5 and EDR1. Autophosphotylated and autoubiquitinated in vitro. In terms of processing, phosphorylation enhances self-ubiquitination. Post-translationally, autoubiquitinated in response to abscisic acid (ABA) and subsequently targeted to proteolysis. Expressed in all tissues of young seedlings. In flowering plants, only detected in the youngest part of the stem, anthers and the receptacle of immature siliques. Not found in mature leave, older parts of the stem, flower parts other than anthers or mature siliques.

The protein resides in the golgi apparatus. The protein localises to the trans-Golgi network. It is found in the early endosome. The catalysed reaction is L-seryl-[protein] + ATP = O-phospho-L-seryl-[protein] + ADP + H(+). The enzyme catalyses L-threonyl-[protein] + ATP = O-phospho-L-threonyl-[protein] + ADP + H(+). It carries out the reaction S-ubiquitinyl-[E2 ubiquitin-conjugating enzyme]-L-cysteine + [acceptor protein]-L-lysine = [E2 ubiquitin-conjugating enzyme]-L-cysteine + N(6)-ubiquitinyl-[acceptor protein]-L-lysine.. It functions in the pathway protein modification; protein ubiquitination. Its function is as follows. Mediates E2-dependent protein ubiquitination. Acts as a negative regulator of abscisic acid signaling. Required for ABI5 degradation, by mediating its ubiquitination. Together with EDR1, may regulate endocytic trafficking and/or the formation of signaling complexes on trans-Golgi network (TGN)/ early endosome (EE) vesicles during stress responses. The protein is E3 ubiquitin-protein ligase KEG (KEG) of Arabidopsis thaliana (Mouse-ear cress).